A 349-amino-acid polypeptide reads, in one-letter code: Putative F-box/LRR-repeat protein At3g16555 (349 aa).

Residues 1–48 (MVLLPWELEEDILSRLPPRSLVQFRSVCKRWNALFDVKSFNKDQFARA) enclose the F-box domain. The LRR repeat unit spans residues 267-290 (VVWISLLTLPPNNLPNLFIVCYGI).

In Arabidopsis thaliana (Mouse-ear cress), this protein is Putative F-box/LRR-repeat protein At3g16555.